We begin with the raw amino-acid sequence, 667 residues long: DNA ligase (667 aa).

Residues 34–38 (DAEYD), 83–84 (SL), and glutamate 113 contribute to the NAD(+) site. Residue lysine 115 is the N6-AMP-lysine intermediate of the active site. Positions 136, 170, 286, and 310 each coordinate NAD(+). Cysteine 404, cysteine 407, cysteine 422, and cysteine 427 together coordinate Zn(2+). The BRCT domain occupies 589–667 (ATDSVLSGKT…EQQLEDVVGK (79 aa)).

This sequence belongs to the NAD-dependent DNA ligase family. LigA subfamily. Requires Mg(2+) as cofactor. Mn(2+) serves as cofactor.

It catalyses the reaction NAD(+) + (deoxyribonucleotide)n-3'-hydroxyl + 5'-phospho-(deoxyribonucleotide)m = (deoxyribonucleotide)n+m + AMP + beta-nicotinamide D-nucleotide.. Its function is as follows. DNA ligase that catalyzes the formation of phosphodiester linkages between 5'-phosphoryl and 3'-hydroxyl groups in double-stranded DNA using NAD as a coenzyme and as the energy source for the reaction. It is essential for DNA replication and repair of damaged DNA. The protein is DNA ligase of Oceanobacillus iheyensis (strain DSM 14371 / CIP 107618 / JCM 11309 / KCTC 3954 / HTE831).